We begin with the raw amino-acid sequence, 473 residues long: ATP synthase subunit beta (473 aa).

153–160 (GGAGVGKT) serves as a coordination point for ATP.

The protein belongs to the ATPase alpha/beta chains family. In terms of assembly, F-type ATPases have 2 components, CF(1) - the catalytic core - and CF(0) - the membrane proton channel. CF(1) has five subunits: alpha(3), beta(3), gamma(1), delta(1), epsilon(1). CF(0) has three main subunits: a(1), b(2) and c(9-12). The alpha and beta chains form an alternating ring which encloses part of the gamma chain. CF(1) is attached to CF(0) by a central stalk formed by the gamma and epsilon chains, while a peripheral stalk is formed by the delta and b chains.

It is found in the cell membrane. The catalysed reaction is ATP + H2O + 4 H(+)(in) = ADP + phosphate + 5 H(+)(out). Produces ATP from ADP in the presence of a proton gradient across the membrane. The catalytic sites are hosted primarily by the beta subunits. This is ATP synthase subunit beta from Rickettsia africae (strain ESF-5).